The sequence spans 221 residues: Secreted protein BARF1 (221 aa).

Positions 1 to 20 (MARFIAQLLLLASCVAAGQA) are cleaved as a signal peptide. 2 consecutive Ig-like domains span residues 21-120 (VTAF…EHLS) and 124-220 (PLTL…GYLS). Residue Asn-95 is glycosylated (N-linked (GlcNAc...) asparagine; by host). Residues Cys-146 and Cys-201 are joined by a disulfide bond.

As to quaternary structure, homohexamer. Interacts with human CSF1. Phosphorylated on serine and threonine by host.

The protein resides in the secreted. Functionally, plays diverse functions in immunomodulation and oncogenicity, maybe by acting as a functional receptor for human CSF1. May inhibit interferon secretion from mononuclear cells. Exhibits oncogenic activity in vitro. The chain is Secreted protein BARF1 from Epstein-Barr virus (strain B95-8) (HHV-4).